The primary structure comprises 152 residues: Ninjurin-1 (152 aa).

Met-1 bears the N-acetylmethionine mark. Residues 1-26 (MDSGTEEYELNGGLPPGTPGSPDASP) form a disordered region. Over 1–78 (MDSGTEEYEL…EQGPSFAFYV (78 aa)) the chain is Extracellular. Residues Ser-21 and Ser-25 each carry the phosphoserine modification. Residues 26 to 37 (PARWGWRHGPIN) form an N-terminal adhesion motif region. The segment at 40-69 (HYASKKSAAESMLDIALLMANASQLKAVVE) is required to induce plasma membrane rupture. Residues 44–55 (KKSAAESMLDIA) are helix alpha1. The helix alpha2 stretch occupies residues 58–74 (MANASQLKAVVEQGPSF). N-linked (GlcNAc...) asparagine glycosylation is present at Asn-60. A helical transmembrane segment spans residues 79-103 (PLVVLISISLVLQIGVGVLLIFLVK). Residues 104 to 113 (YDLNNPAKHA) are Cytoplasmic-facing. Residues 114–138 (KLDFLNNLATGLVFIIVVVNIFITA) form a helical membrane-spanning segment. The Extracellular segment spans residues 139 to 152 (FGVQKPLMDMAPQQ).

Belongs to the ninjurin family. Homodimer; in absence of death stimuli, forms an inactive homodimer. Homooligomer; in response to death stimuli, homooligomerizes into long, highly branched filaments and large, ring-shaped structures in the membrane. Post-translationally, cleaved by MMP9 protease to generate the Secreted ninjurin-1 form. N-linked glycosylation is required for homooligomerization. In terms of tissue distribution, widely expressed in both adult and embryonic tissues, primarily those of epithelial origin.

It localises to the cell membrane. The protein localises to the synaptic cell membrane. Its subcellular location is the secreted. With respect to regulation, in response to death stimuli, homooligomerizes and disrupts membrane integrity by introducing the hydrophilic faces of alpha1 and alpha2 helices into the hydrophobic membrane. Homooligomerization and ability to mediate plasma membrane rupture is inhibited by glycine; it is unclear whether glycine directly or indirectly inhibits homooligomerization. In normal conditions, NINJ1 is autoinhibited via formation of a homodimer: in the inactive homodimer, the alpha1 and alpha2 helices (residues 44-74) form a single transmembrane region without a kink, in which hydrophilic faces of alpha1 and alpha2 helices are sequestered. Its function is as follows. Effector of various programmed cell death, such as pyroptosis and necroptosis, which mediates plasma membrane rupture (cytolysis). Oligomerizes in response to death stimuli and forms ring-like structures on the plasma membrane: acts by cutting and shedding membrane disks, like a cookie cutter, leading to membrane damage and loss that cannot be repaired by the cell. Plasma membrane rupture leads to release intracellular molecules named damage-associated molecular patterns (DAMPs) that propagate the inflammatory response. Mechanistically, mediates plasma membrane rupture by introducing hydrophilic faces of 2 alpha helices into the hydrophobic membrane. Induces plasma membrane rupture downstream of Gasdermin (GSDMA, GSDMB, GSDMC, GSDMD, or GSDME) or MLKL during pyroptosis or necroptosis, respectively. Acts as an effector of PANoptosis downstream of CASP1, CASP4, CASP8 and RIPK3. Also induces plasma membrane rupture in response to cell swelling caused by osmotic stress and ferroptosis downstream of lipid peroxidation. Acts as a regulator of Toll-like receptor 4 (TLR4) signaling triggered by lipopolysaccharide (LPS) during systemic inflammation; directly binds LPS. Involved in leukocyte migration during inflammation by promoting transendothelial migration of macrophages via homotypic binding. Promotes the migration of monocytes across the brain endothelium to central nervous system inflammatory lesions. Also acts as a homophilic transmembrane adhesion molecule involved in various processes such as axonal growth, cell chemotaxis and angiogenesis. Promotes cell adhesion by mediating homophilic interactions via its extracellular N-terminal adhesion motif (N-NAM). Involved in the progression of the inflammatory stress by promoting cell-to-cell interactions between immune cells and endothelial cells. Plays a role in nerve regeneration by promoting maturation of Schwann cells. Acts as a regulator of angiogenesis. Promotes the formation of new vessels by mediating the interaction between capillary pericyte cells and endothelial cells. Promotes osteoclasts development by enhancing the survival of prefusion osteoclasts. Also involved in striated muscle growth and differentiation. In terms of biological role, secreted form generated by cleavage, which has chemotactic activity. Acts as an anti-inflammatory mediator by promoting monocyte recruitment, thereby ameliorating atherosclerosis. The polypeptide is Ninjurin-1 (Homo sapiens (Human)).